The sequence spans 305 residues: tRNA pseudouridine synthase B (305 aa).

Residue Asp39 is the Nucleophile of the active site.

This sequence belongs to the pseudouridine synthase TruB family. Type 1 subfamily.

It catalyses the reaction uridine(55) in tRNA = pseudouridine(55) in tRNA. In terms of biological role, responsible for synthesis of pseudouridine from uracil-55 in the psi GC loop of transfer RNAs. This chain is tRNA pseudouridine synthase B, found in Staphylococcus aureus (strain bovine RF122 / ET3-1).